Here is a 429-residue protein sequence, read N- to C-terminus: Glutamate-1-semialdehyde 2,1-aminomutase (429 aa).

Lysine 267 carries the N6-(pyridoxal phosphate)lysine modification.

This sequence belongs to the class-III pyridoxal-phosphate-dependent aminotransferase family. HemL subfamily. As to quaternary structure, homodimer. The cofactor is pyridoxal 5'-phosphate.

The protein resides in the cytoplasm. The enzyme catalyses (S)-4-amino-5-oxopentanoate = 5-aminolevulinate. It functions in the pathway porphyrin-containing compound metabolism; protoporphyrin-IX biosynthesis; 5-aminolevulinate from L-glutamyl-tRNA(Glu): step 2/2. The protein is Glutamate-1-semialdehyde 2,1-aminomutase of Stenotrophomonas maltophilia (strain R551-3).